The chain runs to 420 residues: Dihydrolipoyllysine-residue succinyltransferase component of 2-oxoglutarate dehydrogenase complex (420 aa).

In terms of domain architecture, Lipoyl-binding spans 3–78; it reads KINILVPDLP…ISQQTLGEIN (76 aa). Lys44 carries the N6-lipoyllysine modification. Residues His391 and Asp395 contribute to the active site.

The protein belongs to the 2-oxoacid dehydrogenase family. Forms a 24-polypeptide structural core with octahedral symmetry. Part of the 2-oxoglutarate dehydrogenase (OGDH) complex composed of E1 (2-oxoglutarate dehydrogenase), E2 (dihydrolipoamide succinyltransferase) and E3 (dihydrolipoamide dehydrogenase); the complex contains multiple copies of the three enzymatic components (E1, E2 and E3). (R)-lipoate is required as a cofactor.

It carries out the reaction N(6)-[(R)-dihydrolipoyl]-L-lysyl-[protein] + succinyl-CoA = N(6)-[(R)-S(8)-succinyldihydrolipoyl]-L-lysyl-[protein] + CoA. It participates in amino-acid degradation; L-lysine degradation via saccharopine pathway; glutaryl-CoA from L-lysine: step 6/6. In terms of biological role, E2 component of the 2-oxoglutarate dehydrogenase (OGDH) complex which catalyzes the second step in the conversion of 2-oxoglutarate to succinyl-CoA and CO(2). This chain is Dihydrolipoyllysine-residue succinyltransferase component of 2-oxoglutarate dehydrogenase complex (sucB), found in Buchnera aphidicola subsp. Acyrthosiphon pisum (strain APS) (Acyrthosiphon pisum symbiotic bacterium).